The following is a 159-amino-acid chain: Large ribosomal subunit protein uL15 (159 aa).

The segment covering 21–34 has biased composition (basic residues); sequence LRPAPGAHKSKIRV. Residues 21 to 55 are disordered; it reads LRPAPGAHKSKIRVGRGEGSKGKTAGRGTKGSKAR.

This sequence belongs to the universal ribosomal protein uL15 family. Part of the 50S ribosomal subunit.

Its function is as follows. Binds to the 23S rRNA. In Frankia casuarinae (strain DSM 45818 / CECT 9043 / HFP020203 / CcI3), this protein is Large ribosomal subunit protein uL15.